We begin with the raw amino-acid sequence, 656 residues long: Pentatricopeptide repeat-containing protein At1g62260, mitochondrial (656 aa).

PPR repeat units lie at residues 70–104 (NTVT…DVVT), 105–134 (WNTM…MPSR), 135–169 (DSFS…NAVS), 170–200 (WSAM…DSSP), 203–227 (ALVA…YGSL), 234–264 (LVYA…IPDL), 280–310 (NVVS…MKDR), 311–345 (DTIS…DAHS), 346–372 (WNMM…TPEK), 373–407 (HTVS…GEKP), 408–438 (DPHT…VVKT), 442–472 (DVPV…MKLK), 474–508 (EVIT…GIYP), 509–544 (SHIT…KIEP), and 545–575 (QMEH…MPFE). The segment at 580 to 655 (VWGALLDACR…ERGSSWVDSS (76 aa)) is type E motif.

The protein belongs to the PPR family. PCMP-E subfamily.

The protein resides in the mitochondrion. This Arabidopsis thaliana (Mouse-ear cress) protein is Pentatricopeptide repeat-containing protein At1g62260, mitochondrial (PCMP-E10).